Here is a 330-residue protein sequence, read N- to C-terminus: Ferredoxin--NADP reductase (330 aa).

Residues Glu-35, Gln-43, Tyr-48, Val-90, Phe-123, Asp-285, and Thr-326 each contribute to the FAD site.

The protein belongs to the ferredoxin--NADP reductase type 2 family. As to quaternary structure, homodimer. FAD serves as cofactor.

The enzyme catalyses 2 reduced [2Fe-2S]-[ferredoxin] + NADP(+) + H(+) = 2 oxidized [2Fe-2S]-[ferredoxin] + NADPH. This is Ferredoxin--NADP reductase from Streptococcus pyogenes serotype M28 (strain MGAS6180).